Here is a 545-residue protein sequence, read N- to C-terminus: CTP synthase (545 aa).

The segment at 1-266 is amidoligase domain; that stretch reads MTTRYIFVTG…DDLVVKRFGL (266 aa). Serine 14 is a CTP binding site. A UTP-binding site is contributed by serine 14. Residues 15-20 and aspartate 72 each bind ATP; that span reads SLGKGI. Positions 72 and 140 each coordinate Mg(2+). CTP-binding positions include 147-149, 187-192, and lysine 223; these read DIE and KTKPTQ. UTP is bound by residues 187 to 192 and lysine 223; that span reads KTKPTQ. Residue 239–241 coordinates ATP; the sequence is KDV. The 252-residue stretch at 291–542 folds into the Glutamine amidotransferase type-1 domain; it reads VIGMVGKYIE…IAAASAHQKR (252 aa). Residue glycine 352 coordinates L-glutamine. Catalysis depends on cysteine 379, which acts as the Nucleophile; for glutamine hydrolysis. L-glutamine contacts are provided by residues 380-383, glutamate 403, and arginine 470; that span reads LGMQ. Catalysis depends on residues histidine 515 and glutamate 517.

The protein belongs to the CTP synthase family. In terms of assembly, homotetramer.

It carries out the reaction UTP + L-glutamine + ATP + H2O = CTP + L-glutamate + ADP + phosphate + 2 H(+). The enzyme catalyses L-glutamine + H2O = L-glutamate + NH4(+). The catalysed reaction is UTP + NH4(+) + ATP = CTP + ADP + phosphate + 2 H(+). It participates in pyrimidine metabolism; CTP biosynthesis via de novo pathway; CTP from UDP: step 2/2. Its activity is regulated as follows. Allosterically activated by GTP, when glutamine is the substrate; GTP has no effect on the reaction when ammonia is the substrate. The allosteric effector GTP functions by stabilizing the protein conformation that binds the tetrahedral intermediate(s) formed during glutamine hydrolysis. Inhibited by the product CTP, via allosteric rather than competitive inhibition. Its function is as follows. Catalyzes the ATP-dependent amination of UTP to CTP with either L-glutamine or ammonia as the source of nitrogen. Regulates intracellular CTP levels through interactions with the four ribonucleotide triphosphates. The chain is CTP synthase from Shewanella baltica (strain OS223).